A 431-amino-acid chain; its full sequence is Enolase (431 aa).

Residues H157 and E166 each coordinate substrate. The Proton donor role is filled by E209. Residues D244, E293, and D318 each contribute to the Mg(2+) site. E293 and D318 together coordinate substrate. Residue K343 is the Proton acceptor of the active site. Substrate contacts are provided by residues 370-373 (SHRS) and K394.

This sequence belongs to the enolase family. Homodimer. The cofactor is Mg(2+).

The protein resides in the cytoplasm. The enzyme catalyses (2R)-2-phosphoglycerate = phosphoenolpyruvate + H2O. Its pathway is carbohydrate degradation; glycolysis; pyruvate from D-glyceraldehyde 3-phosphate: step 4/5. The chain is Enolase (ENO) from Fasciola hepatica (Liver fluke).